The sequence spans 351 residues: 3-dehydroquinate synthase (351 aa).

NAD(+)-binding positions include 126-127, K138, and K147; that span reads TT. Positions 180, 244, and 260 each coordinate Zn(2+).

Belongs to the sugar phosphate cyclases superfamily. Dehydroquinate synthase family. It depends on Co(2+) as a cofactor. The cofactor is Zn(2+). Requires NAD(+) as cofactor.

The protein resides in the cytoplasm. It catalyses the reaction 7-phospho-2-dehydro-3-deoxy-D-arabino-heptonate = 3-dehydroquinate + phosphate. The protein operates within metabolic intermediate biosynthesis; chorismate biosynthesis; chorismate from D-erythrose 4-phosphate and phosphoenolpyruvate: step 2/7. Functionally, catalyzes the conversion of 3-deoxy-D-arabino-heptulosonate 7-phosphate (DAHP) to dehydroquinate (DHQ). This is 3-dehydroquinate synthase from Exiguobacterium sp. (strain ATCC BAA-1283 / AT1b).